A 377-amino-acid polypeptide reads, in one-letter code: Lipoyl synthase, mitochondrial (377 aa).

[4Fe-4S] cluster is bound by residues Cys98, Cys103, Cys109, Cys128, Cys132, Cys135, and Ser343. Positions 113–332 constitute a Radical SAM core domain; sequence KKSEATATIM…RDTALDMGFL (220 aa).

The protein belongs to the radical SAM superfamily. Lipoyl synthase family. [4Fe-4S] cluster serves as cofactor.

The protein resides in the mitochondrion. It catalyses the reaction [[Fe-S] cluster scaffold protein carrying a second [4Fe-4S](2+) cluster] + N(6)-octanoyl-L-lysyl-[protein] + 2 oxidized [2Fe-2S]-[ferredoxin] + 2 S-adenosyl-L-methionine + 4 H(+) = [[Fe-S] cluster scaffold protein] + N(6)-[(R)-dihydrolipoyl]-L-lysyl-[protein] + 4 Fe(3+) + 2 hydrogen sulfide + 2 5'-deoxyadenosine + 2 L-methionine + 2 reduced [2Fe-2S]-[ferredoxin]. The protein operates within protein modification; protein lipoylation via endogenous pathway; protein N(6)-(lipoyl)lysine from octanoyl-[acyl-carrier-protein]: step 2/2. Functionally, catalyzes the radical-mediated insertion of two sulfur atoms into the C-6 and C-8 positions of the octanoyl moiety bound to the lipoyl domains of lipoate-dependent enzymes, thereby converting the octanoylated domains into lipoylated derivatives. This Candida tropicalis (strain ATCC MYA-3404 / T1) (Yeast) protein is Lipoyl synthase, mitochondrial.